The chain runs to 160 residues: Large ribosomal subunit protein bL19 (160 aa).

2 stretches are compositionally biased toward basic and acidic residues: residues 1 to 15 and 28 to 39; these read MTED…KEES and ATRETKPKDSPS. The tract at residues 1–44 is disordered; that stretch reads MTEDLKNTSPSKEESNEIEESSKATPKATRETKPKDSPSKTKLS.

This sequence belongs to the bacterial ribosomal protein bL19 family.

In terms of biological role, this protein is located at the 30S-50S ribosomal subunit interface and may play a role in the structure and function of the aminoacyl-tRNA binding site. The sequence is that of Large ribosomal subunit protein bL19 from Prochlorococcus marinus (strain SARG / CCMP1375 / SS120).